The primary structure comprises 520 residues: MALSSRARAFSVEALVGRPSKRKLQDPIQAEQPELREKKGGEEEEERRSSAAGKSEPLEKQPKTEPSTSASSGCGSDSGYGNSSESLEEKDIQMELQGSELWKRFHDIGTEMIITKAGRRMFPSVRVKVKGLDPGKQYHVAIDVVPVDSKRYRYVYHSSQWMVAGNTDHLCIIPRFYVHPDSPCSGETWMRQIISFDRMKLTNNEMDDKGHIILQSMHKYKPRVHVIEQGSSVDLSQIQSLPTEGVKTFSFKETEFTTVTAYQNQQITKLKIERNPFAKGFRDTGRNRGVLDGLLETYPWRPSFTLDFKTFGADTQSGSSGSSPVTSSGGAPSPLNSLLSPLCFSPMFHLPTSSLGMPCPEAYLPNVNLPLCYKICPTNFWQQQPLVLPAPERLASSNSSQSLAPLMMEVPMLSSLGVTNSKSGSSEDSSDQYLQAPNSTNQMLYGLQSPGNIFLPNSITPEALSCSFHPSYDFYRYNFSMPSRLISGSNHLKVNDDSQVSFGEGKCNHVHWYPAINHYL.

Residues 1 to 91 are disordered; sequence MALSSRARAF…NSSESLEEKD (91 aa). Residues 33-49 show a composition bias toward basic and acidic residues; that stretch reads PELREKKGGEEEEERRS. Residues 67-84 show a composition bias toward low complexity; the sequence is STSASSGCGSDSGYGNSS. A DNA-binding region (T-box) is located at residues 96 to 283; that stretch reads LQGSELWKRF…RNPFAKGFRD (188 aa).

As to expression, seems to be expressed at a low level.

The protein localises to the nucleus. Probable transcriptional regulator involved in developmental processes. This is major determinant crucial to palatogenesis. The sequence is that of T-box transcription factor TBX22 (TBX22) from Homo sapiens (Human).